We begin with the raw amino-acid sequence, 518 residues long: ORC1-type DNA replication protein 7 (518 aa).

94–98 (TGKTA) is an ATP binding site. Residues 165-196 (DDDPNALEIGGSPGDDRTGNESSEGSDVSDSF) form a disordered region. Over residues 186 to 196 (SSEGSDVSDSF) the composition is skewed to low complexity. ATP is bound by residues Tyr318 and Arg330.

Belongs to the CDC6/cdc18 family.

Its function is as follows. Involved in regulation of DNA replication. Required to initiate DNA replication of the circular chromosome at a nearby autonomously replicating sequence (ARS) oriC1. In Halobacterium salinarum (strain ATCC 700922 / JCM 11081 / NRC-1) (Halobacterium halobium), this protein is ORC1-type DNA replication protein 7 (orc7).